A 129-amino-acid polypeptide reads, in one-letter code: Putative F-box protein At3g42722 (129 aa).

The F-box domain maps to 4–50 (MASIDCLPDELLVGILSFILTNEAASTSILSKRWRTLFAFSHNLDCN).

This Arabidopsis thaliana (Mouse-ear cress) protein is Putative F-box protein At3g42722.